A 332-amino-acid polypeptide reads, in one-letter code: Elongin-A (332 aa).

An F-box domain is found at 24-68 (LEDIGHMPYALVRRVLLKMSAEQLLRLERASPALLLEDEEAWQQL). The segment at 228–332 (TPSAQPAASL…KPRVYIHTPR (105 aa)) is disordered. Polar residues predominate over residues 296–309 (LFSSPALSTLLPQQ). Over residues 320–332 (PPKKPRVYIHTPR) the composition is skewed to basic residues.

The protein belongs to the ELA1 family. Heterodimer with ELC1. Component of a CRL3 E3 ubiquitin ligase complex consisting of a cullin, the linker protein ELC1, the substrate receptor ELA1, and a RING protein. Interacts with the large RNA polymerase II subunit RPO21 in a manner dependent on DEF1.

In terms of biological role, as part of the CRL3 E3 ubiquitin ligase complex; polyubiquitylates monoubiquitylated RNA polymerase II subunit RPO21 to trigger its proteolysis; plays a role in global genomic repair. In Eremothecium gossypii (strain ATCC 10895 / CBS 109.51 / FGSC 9923 / NRRL Y-1056) (Yeast), this protein is Elongin-A (ELA1).